A 278-amino-acid chain; its full sequence is MQINNQSRDVFYVSDGTAITCETLGHVVLGQFPFIPNEKTFPFVESQDKVADVVKEIETSYQRNGVKPLVFFSIVVPGVREMLLEAPAYSYDVLESIVQKVQDDIQMAPAPKLQRSRSVGKDSDTYFDRIAAIEYTLAHDDGITLKGLEQADIILLGVSRSGKTPTSLYMAMQFGLRVVNYPFIAEDVKMMRLLPEFEVHRHKLFGLTITPERLNEIRENRLSGSDYASEEQCKLELDTVEALFRREAIPYINTSSLSVEEISTRILERAGMKRRLFG.

Position 157-164 (157-164) interacts with ADP; that stretch reads GVSRSGKT.

The protein belongs to the pyruvate, phosphate/water dikinase regulatory protein family. PSRP subfamily.

It carries out the reaction [pyruvate, water dikinase] + ADP = [pyruvate, water dikinase]-phosphate + AMP + H(+). It catalyses the reaction [pyruvate, water dikinase]-phosphate + phosphate + H(+) = [pyruvate, water dikinase] + diphosphate. In terms of biological role, bifunctional serine/threonine kinase and phosphorylase involved in the regulation of the phosphoenolpyruvate synthase (PEPS) by catalyzing its phosphorylation/dephosphorylation. The sequence is that of Putative phosphoenolpyruvate synthase regulatory protein from Vibrio parahaemolyticus serotype O3:K6 (strain RIMD 2210633).